Reading from the N-terminus, the 229-residue chain is 7-cyano-7-deazaguanine synthase (229 aa).

Position 15–25 (15–25 (LSGGLDSTTCL)) interacts with ATP. Zn(2+) is bound by residues C192, C202, C205, and C208.

It belongs to the QueC family. The cofactor is Zn(2+).

The catalysed reaction is 7-carboxy-7-deazaguanine + NH4(+) + ATP = 7-cyano-7-deazaguanine + ADP + phosphate + H2O + H(+). Its pathway is purine metabolism; 7-cyano-7-deazaguanine biosynthesis. Functionally, catalyzes the ATP-dependent conversion of 7-carboxy-7-deazaguanine (CDG) to 7-cyano-7-deazaguanine (preQ(0)). This is 7-cyano-7-deazaguanine synthase from Acinetobacter baylyi (strain ATCC 33305 / BD413 / ADP1).